Consider the following 79-residue polypeptide: Translational regulator CsrA (79 aa).

Belongs to the CsrA/RsmA family. Homodimer; the beta-strands of each monomer intercalate to form a hydrophobic core, while the alpha-helices form wings that extend away from the core.

The protein localises to the cytoplasm. Its function is as follows. A translational regulator that binds mRNA to regulate translation initiation and/or mRNA stability. Usually binds in the 5'-UTR at or near the Shine-Dalgarno sequence preventing ribosome-binding, thus repressing translation. Its main target seems to be the major flagellin gene, while its function is anatagonized by FliW. In Leptospira biflexa serovar Patoc (strain Patoc 1 / Ames), this protein is Translational regulator CsrA.